Here is a 284-residue protein sequence, read N- to C-terminus: Malonyl-[acyl-carrier protein] O-methyltransferase (284 aa).

Belongs to the methyltransferase superfamily.

It carries out the reaction malonyl-[ACP] + S-adenosyl-L-methionine = malonyl-[ACP] methyl ester + S-adenosyl-L-homocysteine. Its pathway is cofactor biosynthesis; biotin biosynthesis. Its function is as follows. Converts the free carboxyl group of a malonyl-thioester to its methyl ester by transfer of a methyl group from S-adenosyl-L-methionine (SAM). It allows to synthesize pimeloyl-ACP via the fatty acid synthetic pathway. The polypeptide is Malonyl-[acyl-carrier protein] O-methyltransferase (Legionella pneumophila subsp. pneumophila (strain Philadelphia 1 / ATCC 33152 / DSM 7513)).